Here is an 88-residue protein sequence, read N- to C-terminus: Small ribosomal subunit protein uS17 (88 aa).

Belongs to the universal ribosomal protein uS17 family. As to quaternary structure, part of the 30S ribosomal subunit.

In terms of biological role, one of the primary rRNA binding proteins, it binds specifically to the 5'-end of 16S ribosomal RNA. This chain is Small ribosomal subunit protein uS17, found in Ectopseudomonas mendocina (strain ymp) (Pseudomonas mendocina).